Consider the following 419-residue polypeptide: Delta(8)-fatty-acid desaturase (419 aa).

Residues 1-64 enclose the Cytochrome b5 heme-binding domain; the sequence is MKSKRQALSP…LKRMPKINPS (64 aa). The heme site is built by His24 and His47. A helical membrane pass occupies residues 110-130; it reads LGVLGYFLMVQYQMYFIGAVL. Positions 143-147 match the Histidine box-1 motif; it reads HDICH. The chain crosses the membrane as a helical span at residues 156–176; the sequence is WNNLVGLVFGNGLQGFSVTCW. Residues 180–184 carry the Histidine box-2 motif; sequence HNAHH. Helical transmembrane passes span 226–246, 266–286, and 290–310; these read YFLV…VLTV, IGLA…MPSI, and LLVF…VVFM. The Histidine box-3 signature appears at 355–359; it reads QIEHH.

This sequence belongs to the fatty acid desaturase type 1 family. Requires Fe cation as cofactor.

The protein resides in the membrane. The catalysed reaction is an (11Z,14Z)-icosadienoyl-containing glycerolipid + 2 Fe(II)-[cytochrome b5] + O2 + 2 H(+) = an (8Z,11Z,14Z)-icosatrienoyl-containing glycerolipid + 2 Fe(III)-[cytochrome b5] + 2 H2O. The enzyme catalyses an (11Z,14Z,17Z)-icosatrienoyl-containing glycerolipid + 2 Fe(II)-[cytochrome b5] + O2 + 2 H(+) = an (8Z,11Z,14Z,17Z)-eicosatetraenoyl-containing glycerolipid + 2 Fe(III)-[cytochrome b5] + 2 H2O. It carries out the reaction an (11Z)-eicosenoyl-containing glycerolipid + 2 Fe(II)-[cytochrome b5] + O2 + 2 H(+) = a (8Z,11Z)-eicosadienoyl-containing glycerolipid + 2 Fe(III)-[cytochrome b5] + 2 H2O. It functions in the pathway lipid metabolism; fatty acid metabolism. Functionally, delta(8)-fatty-acid desaturase which introduces a double bond at the 8-position in 20-carbon chain length fatty acids (C20) that have an existing delta-11 unsaturation (double bond). Whether it acts on CoA-linked substrates (as in animals) or phospholipid-linked substrates (as in plants and fungi) is still not clear. This is Delta(8)-fatty-acid desaturase (efd1) from Euglena gracilis.